Consider the following 919-residue polypeptide: Kinesin-like protein KIN-UA (919 aa).

Residues 1–68 (MSTTSGTGGV…SGGGGDAGVP (68 aa)) are disordered. The segment covering 15–51 (GTQRSSLRTQSSASTSSGGQKASVKSKSVLRKSSPAA) has biased composition (low complexity). Residues 52 to 66 (LGGGSSKSGGGGDAG) show a composition bias toward gly residues. The Kinesin motor domain occupies 70-412 (RVRVAVRLRP…IMFGQRAMKV (343 aa)). Residue 155–162 (GQTGTGKT) coordinates ATP. The disordered stretch occupies residues 286–305 (TRDGLSSESNGNSHMTKSLK). Over residues 291–301 (SSESNGNSHMT) the composition is skewed to polar residues. Residues 382–390 (RTSLVITIG) carry the D-BOX motif. Coiled-coil stretches lie at residues 428–492 (SRRL…SIKK) and 530–621 (ALEE…LEQH). 4 ARM repeats span residues 650–689 (KPPVARLFEQVGLQKILSLLEAEDADVRIHAVKVVANLAA), 691–731 (EANQ…NLAM), 733–773 (ETNQ…NLCG), and 775–814 (DKLQTKLRSEGGIAALLGMVRCGHPDVLAQVARGIANFAK).

It belongs to the TRAFAC class myosin-kinesin ATPase superfamily. Kinesin family. Ungrouped subfamily. In terms of assembly, interacts (via C-terminus) with NEK5. Expressed in leaves, guard cells, trichomes, vascular tissues, stele of the root tip region and columella cells. Highest expression detected in guard cells.

It is found in the cytoplasm. Its subcellular location is the cytoskeleton. The protein is Kinesin-like protein KIN-UA of Arabidopsis thaliana (Mouse-ear cress).